The sequence spans 96 residues: MSTVNVLRYSALGLGLFFGFRNDMILKCNAKKKEEQAQYEEKLKLVEEAKKEYAKLHPVVTPKDVPANASFNLEDPNIDFERVILNAVESLKEAST.

Serine 2 carries the N-acetylserine modification.

The protein belongs to the ATPase e subunit family. As to quaternary structure, F-type ATPases have 2 components, CF(1) - the catalytic core - and CF(0) - the membrane proton channel. In yeast, the dimeric form of ATP synthase consists of 17 polypeptides: alpha, beta, gamma, delta, epsilon, 4 (B), 5 (OSCP), 6 (A), 8, 9 (C), d, E (Tim11), f, g, h, i/j and k.

Its subcellular location is the mitochondrion. It is found in the mitochondrion inner membrane. In terms of biological role, mitochondrial membrane ATP synthase (F(1)F(0) ATP synthase or Complex V) produces ATP from ADP in the presence of a proton gradient across the membrane which is generated by electron transport complexes of the respiratory chain. F-type ATPases consist of two structural domains, F(1) - containing the extramembraneous catalytic core, and F(0) - containing the membrane proton channel, linked together by a central stalk and a peripheral stalk. During catalysis, ATP synthesis in the catalytic domain of F(1) is coupled via a rotary mechanism of the central stalk subunits to proton translocation. Part of the complex F(0) domain. Minor subunit located with subunit a in the membrane. This Saccharomyces cerevisiae (strain ATCC 204508 / S288c) (Baker's yeast) protein is ATP synthase subunit e, mitochondrial (TIM11).